The chain runs to 342 residues: MSAFTPASEVLLRHSDDFEQSRILFAGDLQDDLPARFECAASRAYTQQFHHWQALSRQMGDNVRFSLVAQASDVADCDTLIYYWPKNKPEAQFQLMNILSLMPVGSDVFVVGENRSGVRSAEPMLADYAPLNKVDSARRCGLYHGRLEKQPQFSLESWWAEYNIDGLTIKTLPGVFSRDGLDVGSQLLLSTLTPHTKGKVLDVGCGAGVLSAALASHSPKVRLTLCDVSAPAVEASRATLAANGLEGEVFASNVFSEVKGRFDMIISNPPFHDGMQTSLDAAQTLIRGAVRHLNSGGELRIVANAFLPYPKILDETFGFHEVIAQTGRFKVYRIVMTRQAKK.

This sequence belongs to the methyltransferase superfamily. RsmC family. As to quaternary structure, monomer.

The protein localises to the cytoplasm. The catalysed reaction is guanosine(1207) in 16S rRNA + S-adenosyl-L-methionine = N(2)-methylguanosine(1207) in 16S rRNA + S-adenosyl-L-homocysteine + H(+). Functionally, specifically methylates the guanine in position 1207 of 16S rRNA in the 30S particle. In Salmonella typhi, this protein is Ribosomal RNA small subunit methyltransferase C.